Reading from the N-terminus, the 74-residue chain is uncharacterized protein (74 aa).

Disordered regions lie at residues Met-1–Phe-26 and Ile-46–Gln-74. A helical membrane pass occupies residues Val-34–Pro-50. Residues Thr-47–Gln-74 show a composition bias toward low complexity.

The protein resides in the membrane. This is an uncharacterized protein from Dictyostelium discoideum (Social amoeba).